The following is a 487-amino-acid chain: N-succinylglutamate 5-semialdehyde dehydrogenase (487 aa).

221–226 (GSSDTG) is an NAD(+) binding site. Residues E244 and C278 contribute to the active site.

Belongs to the aldehyde dehydrogenase family. AstD subfamily.

The catalysed reaction is N-succinyl-L-glutamate 5-semialdehyde + NAD(+) + H2O = N-succinyl-L-glutamate + NADH + 2 H(+). It participates in amino-acid degradation; L-arginine degradation via AST pathway; L-glutamate and succinate from L-arginine: step 4/5. Its function is as follows. Catalyzes the NAD-dependent reduction of succinylglutamate semialdehyde into succinylglutamate. This is N-succinylglutamate 5-semialdehyde dehydrogenase from Burkholderia orbicola (strain MC0-3).